The chain runs to 342 residues: uncharacterized protein (342 aa).

Residues 3 to 173 (IAIRGGHNFL…LIGYLIAKGI (171 aa)) form the MurNAc-LAA domain.

The protein to C.perfringens CPE1502.

This is an uncharacterized protein from Clostridium perfringens.